The chain runs to 678 residues: Protein distal antenna (678 aa).

The 52-residue stretch at 7–58 (TKGKRPLRSLTPRDKIHAIQRIHDGESKASVARDIGVPESTLRGWCKNEDKL) folds into the HTH psq-type domain. Positions 34 to 54 (KASVARDIGVPESTLRGWCKN) form a DNA-binding region, H-T-H motif. Disordered regions lie at residues 232–310 (GAGN…GGPM), 344–381 (GVTS…PSGS), 445–528 (KETE…TSEC), 541–592 (GMEA…DEEE), and 645–678 (NETP…RRRK). Composition is skewed to polar residues over residues 241-254 (PSGQ…SPRS) and 349-363 (PIRS…QLAQ). Phosphoserine is present on residues Ser-251 and Ser-254. Low complexity predominate over residues 372–381 (LTPSSTPSGS). Positions 449 to 461 (TPSVRSLSSNEQN) are enriched in polar residues. Residues 462–478 (PEADEATETDLDGEVEP) are compositionally biased toward acidic residues. Residues 495-508 (TPSQSPIAHSSGSR) are compositionally biased toward polar residues. The segment covering 570 to 586 (NNNDVSASNNNNNNNSN) has biased composition (low complexity). A compositionally biased stretch (acidic residues) spans 657-667 (EDSEEHAAEEE).

In terms of assembly, homomers. Interacts with itself, danr, ey and dac to form a complex (or complexes) containing the RD factors. Coexpressed with danr in the presumptive distal antenna, but not in the leg imaginal disk. Both proteins are also expressed in the brain and the eye region of the eye-antenna disk. First detected in early L3 eye disks in cells surrounding the newly initiated MF. Levels are uniform and high anterior to the furrow, lower levels within and posterior to the furrow. Limited expression is seen in small groups of cells in leg and wing. These appear in the location of prominent sense organ progenitors at relatively late stages of disk development.

The protein localises to the nucleus. Its function is as follows. Probable transcription factor with a role in the retinal determination (RD) network. Regulates ato expression and is required for normal R8 induction and differentiation. Danr appears to repress Dan expression, but Dan is required for Danr expression anterior to the morphogenetic furrow (MF). Dan and Danr lie downstream of so and require dac function for highest levels of expression. Contributes to differentiation of antenna-specific characteristics; effector gene that acts downstream of homothorax (hth), Distal-less (Dll), cut (ct) and spineless (ss) genes to control differentiation of distal antennal structures. The polypeptide is Protein distal antenna (Drosophila melanogaster (Fruit fly)).